The following is a 252-amino-acid chain: UPF0714 protein YndL (252 aa).

The chain crosses the membrane as a helical span at residues 33–51 (IVKLLMIFMVFTPISSIYA).

Belongs to the UPF0714 family.

It is found in the cell membrane. The sequence is that of UPF0714 protein YndL (yndL) from Bacillus subtilis (strain 168).